A 459-amino-acid polypeptide reads, in one-letter code: ATP-dependent 6-phosphofructokinase (459 aa).

Residues glycine 89, 154 to 155 (RG), and 179 to 182 (GDGG) contribute to the ATP site. Residue aspartate 180 coordinates Mg(2+). Substrate-binding positions include 208 to 210 (TID), 253 to 255 (MGR), glutamate 309, and 368 to 371 (YAIR). Aspartate 210 serves as the catalytic Proton acceptor.

Belongs to the phosphofructokinase type A (PFKA) family. PPi-dependent PFK group II subfamily. Atypical ATP-dependent clade 'X' sub-subfamily. Homodimer. The cofactor is Mg(2+).

It localises to the cytoplasm. The enzyme catalyses beta-D-fructose 6-phosphate + ATP = beta-D-fructose 1,6-bisphosphate + ADP + H(+). It functions in the pathway carbohydrate degradation; glycolysis; D-glyceraldehyde 3-phosphate and glycerone phosphate from D-glucose: step 3/4. AMP causes 20-40% inhibition and diphosphate causes 20-50% inhibition. ADP, citrate, PEP and FBP have no effect. Its function is as follows. Catalyzes the phosphorylation of D-fructose 6-phosphate to fructose 1,6-bisphosphate by ATP, the first committing step of glycolysis. This is ATP-dependent 6-phosphofructokinase from Amycolatopsis methanolica.